Reading from the N-terminus, the 794-residue chain is uncharacterized protein (794 aa).

The first 22 residues, 1–22, serve as a signal peptide directing secretion; that stretch reads MKLKYGTIIFSGLLGVSAILAA. Residue C23 is the site of N-palmitoyl cysteine attachment. Residue C23 is the site of S-diacylglycerol cysteine attachment. Residues 177–196 are compositionally biased toward polar residues; it reads SSGKTQVSQTSSGSNQQKTL. Disordered regions lie at residues 177–208, 220–257, and 466–506; these read SSGKTQVSQTSSGSNQQKTLQKPLKIDTSDSS, AKNNGKKANNSKSNRRSTDQSTQTHNDQGDASESDKKI, and KSTD…ENNS. Low complexity predominate over residues 220–231; that stretch reads AKNNGKKANNSK. The segment covering 238-250 has biased composition (polar residues); it reads DQSTQTHNDQGDA.

It belongs to the MG185/MG260 family.

The protein resides in the cell membrane. This is an uncharacterized protein from Mycoplasma pneumoniae (strain ATCC 29342 / M129 / Subtype 1) (Mycoplasmoides pneumoniae).